A 358-amino-acid polypeptide reads, in one-letter code: DNA polymerase IV (358 aa).

Positions 4–185 (IIHIDMDCYF…LSLRKIPGVG (182 aa)) constitute a UmuC domain. Positions 8 and 103 each coordinate Mg(2+). E104 is an active-site residue.

This sequence belongs to the DNA polymerase type-Y family. As to quaternary structure, monomer. It depends on Mg(2+) as a cofactor.

The protein resides in the cytoplasm. It catalyses the reaction DNA(n) + a 2'-deoxyribonucleoside 5'-triphosphate = DNA(n+1) + diphosphate. Its function is as follows. Poorly processive, error-prone DNA polymerase involved in untargeted mutagenesis. Copies undamaged DNA at stalled replication forks, which arise in vivo from mismatched or misaligned primer ends. These misaligned primers can be extended by PolIV. Exhibits no 3'-5' exonuclease (proofreading) activity. May be involved in translesional synthesis, in conjunction with the beta clamp from PolIII. The chain is DNA polymerase IV from Shewanella baltica (strain OS155 / ATCC BAA-1091).